The chain runs to 210 residues: Glutathione S-transferase P 10 (210 aa).

Residues 2-81 (AVPQLYYFTI…HLGRVHGLNG (80 aa)) form the GST N-terminal domain. Glutathione is bound by residues Y8, W41, K45, 52–53 (QL), and 65–66 (QT). Residues 83 to 200 (NEQEATFLDM…YLEKRKADKV (118 aa)) enclose the GST C-terminal domain.

It belongs to the GST superfamily. Pi family. Homodimer. In terms of tissue distribution, expressed in cells at the mouth and adjacent to the pharyngeal bulbs of the head and also in the tail.

It carries out the reaction RX + glutathione = an S-substituted glutathione + a halide anion + H(+). In terms of biological role, conjugation of reduced glutathione to a wide number of exogenous and endogenous hydrophobic electrophiles. Responsible for approximately one-third of 4-hydroxy-2-nonenal conjugation. May play a role in the detoxification of reactive oxygen species produced during pathogenic bacterial infection. In Caenorhabditis elegans, this protein is Glutathione S-transferase P 10.